The sequence spans 78 residues: MALNKKGAKRRRKKVCAFCADKSSSIDYKDVNKLRKYVTERGKILPRRISGNCAKHQRELTLAIKRARNVALLPFTTD.

This sequence belongs to the bacterial ribosomal protein bS18 family. As to quaternary structure, part of the 30S ribosomal subunit. Forms a tight heterodimer with protein bS6.

Its function is as follows. Binds as a heterodimer with protein bS6 to the central domain of the 16S rRNA, where it helps stabilize the platform of the 30S subunit. The protein is Small ribosomal subunit protein bS18 of Clostridium novyi (strain NT).